We begin with the raw amino-acid sequence, 236 residues long: 2,3,4,5-tetrahydropyridine-2,6-dicarboxylate N-acetyltransferase (236 aa).

Belongs to the transferase hexapeptide repeat family. DapH subfamily.

It catalyses the reaction (S)-2,3,4,5-tetrahydrodipicolinate + acetyl-CoA + H2O = L-2-acetamido-6-oxoheptanedioate + CoA. It functions in the pathway amino-acid biosynthesis; L-lysine biosynthesis via DAP pathway; LL-2,6-diaminopimelate from (S)-tetrahydrodipicolinate (acetylase route): step 1/3. Its function is as follows. Catalyzes the transfer of an acetyl group from acetyl-CoA to tetrahydrodipicolinate. The polypeptide is 2,3,4,5-tetrahydropyridine-2,6-dicarboxylate N-acetyltransferase (Clostridium botulinum (strain Eklund 17B / Type B)).